The sequence spans 230 residues: Type II restriction enzyme MjaV (230 aa).

It carries out the reaction Endonucleolytic cleavage of DNA to give specific double-stranded fragments with terminal 5'-phosphates.. In terms of biological role, a P subtype restriction enzyme that recognizes the double-stranded sequence 5'-GTAC-3'; the cleavage site is unknown. This Methanocaldococcus jannaschii (strain ATCC 43067 / DSM 2661 / JAL-1 / JCM 10045 / NBRC 100440) (Methanococcus jannaschii) protein is Type II restriction enzyme MjaV (mjaVR).